We begin with the raw amino-acid sequence, 110 residues long: Integration host factor subunit alpha (110 aa).

It belongs to the bacterial histone-like protein family. In terms of assembly, heterodimer of an alpha and a beta chain.

Functionally, this protein is one of the two subunits of integration host factor, a specific DNA-binding protein that functions in genetic recombination as well as in transcriptional and translational control. In Methylococcus capsulatus (strain ATCC 33009 / NCIMB 11132 / Bath), this protein is Integration host factor subunit alpha.